Consider the following 353-residue polypeptide: Cyanuric acid amidohydrolase (353 aa).

Residues 1–90 (MSSTALYTVP…NIFVRDERQY (90 aa)) are RU A. Substrate-binding positions include arginine 49 and 69–70 (SG). Positions 96-231 (GLVTAVGRTR…CHILVVAESD (136 aa)) are RU B. The active site involves lysine 145. Residues arginine 177 and 214–215 (SS) each bind substrate. Serine 214 (nucleophile) is an active-site residue. The interval 237-353 (LRAAHTAMRD…TANATGEASR (117 aa)) is RU C. Glutamate 275 lines the Mg(2+) pocket. Residues arginine 302 and 321–322 (SG) contribute to the substrate site. Mg(2+) is bound by residues alanine 324, glutamine 327, glycine 328, proline 329, and glycine 332.

It belongs to the cyclic amide hydrolase (CyAH) family. Homotetramer.

The enzyme catalyses cyanurate + H2O = 1-carboxybiuret + H(+). The protein operates within xenobiotic degradation; atrazine degradation; biuret from cyanurate: step 1/1. Its activity is regulated as follows. Inhibited by barbituric acid. Functionally, responsible for the hydrolysis of cyanuric acid, an intermediate formed during catabolism of s-triazine based compounds in herbicides such as atrazine and polymers such as melamine. Catalyzes the hydrolytic opening of the s-triazine ring of cyanuric acid (2,4,6-trihydroxy-s-triazine) to yield carbon dioxide and carboxybiuret, which spontaneously decarboxylates to biuret. Required for growth on melamine or cyanuric acid as sole nitrogen source. This Rhodococcus sp protein is Cyanuric acid amidohydrolase.